A 940-amino-acid polypeptide reads, in one-letter code: Isoleucine--tRNA ligase (940 aa).

The short motif at 58–68 is the 'HIGH' region element; the sequence is PYANGSIHIGH. Glu564 serves as a coordination point for L-isoleucyl-5'-AMP. A 'KMSKS' region motif is present at residues 605–609; that stretch reads KMSKS. Lys608 provides a ligand contact to ATP. The Zn(2+) site is built by Cys903, Cys906, Cys923, and Cys926.

The protein belongs to the class-I aminoacyl-tRNA synthetase family. IleS type 1 subfamily. In terms of assembly, monomer. Zn(2+) is required as a cofactor.

The protein resides in the cytoplasm. The catalysed reaction is tRNA(Ile) + L-isoleucine + ATP = L-isoleucyl-tRNA(Ile) + AMP + diphosphate. Catalyzes the attachment of isoleucine to tRNA(Ile). As IleRS can inadvertently accommodate and process structurally similar amino acids such as valine, to avoid such errors it has two additional distinct tRNA(Ile)-dependent editing activities. One activity is designated as 'pretransfer' editing and involves the hydrolysis of activated Val-AMP. The other activity is designated 'posttransfer' editing and involves deacylation of mischarged Val-tRNA(Ile). The chain is Isoleucine--tRNA ligase from Shewanella baltica (strain OS223).